Consider the following 196-residue polypeptide: DnaA initiator-associating protein DiaA (196 aa).

The SIS domain occupies 34–196 (LVHSLLNGNK…DNTLFLHQDD (163 aa)).

The protein belongs to the SIS family. DiaA subfamily. In terms of assembly, homotetramer; dimer of dimers.

Required for the timely initiation of chromosomal replication via direct interactions with the DnaA initiator protein. The chain is DnaA initiator-associating protein DiaA from Salmonella paratyphi A (strain ATCC 9150 / SARB42).